A 340-amino-acid polypeptide reads, in one-letter code: Flavonoid 7-O-methyltransferase 1 (340 aa).

D207 lines the S-adenosyl-L-methionine pocket. H245 functions as the Proton acceptor in the catalytic mechanism.

Belongs to the class I-like SAM-binding methyltransferase superfamily. Cation-independent O-methyltransferase family. In terms of assembly, homodimer. In terms of tissue distribution, expressed in leaves.

It catalyses the reaction (2S)-naringenin + S-adenosyl-L-methionine = (2S)-sakuranetin + S-adenosyl-L-homocysteine + H(+). It carries out the reaction scutellarein + S-adenosyl-L-methionine = scutellarein 7-methyl ether + S-adenosyl-L-homocysteine. The catalysed reaction is apigenin + S-adenosyl-L-methionine = genkwanin + S-adenosyl-L-homocysteine + H(+). The enzyme catalyses luteolin + S-adenosyl-L-methionine = luteolin 7-methyl ether + S-adenosyl-L-homocysteine + H(+). It catalyses the reaction chrysoeriol + S-adenosyl-L-methionine = velutin + S-adenosyl-L-homocysteine. It carries out the reaction diosmetin + S-adenosyl-L-methionine = luteolin 4',7-dimethyl ether + S-adenosyl-L-homocysteine. The catalysed reaction is acacetin + S-adenosyl-L-methionine = apigenin 4',7-dimethyl ether + S-adenosyl-L-homocysteine. The enzyme catalyses scutellarein 4'-methyl ether + S-adenosyl-L-methionine = ladanein + S-adenosyl-L-homocysteine. The protein operates within flavonoid metabolism. Its function is as follows. Flavonoid 7-O-methyltransferase involved in the biosynthesis of polymethoxylated flavonoids natural products such as nevadensin and salvigenin, aroma compounds which contribute to the flavor of sweet basil, and exhibit pharmacological activities such as anti-allergic, anti-oxidant, antibacterial, anti-proliferative, and anti-inflammatory effects. Catalyzes S-adenosylmethionine-dependent regioselective 7-O-methylation of flavonoids; active on various hydroxylated flavonoid substrates, including apigenin (API) and luteolin (LUT), and, with a lower efficiency, scutellarein (SCU), naringenin (NAR), chrysoeriol (CHRYS), diosmetin (DIOS), acacetin (ACA) and scutellarein-7-methyl ether (SCU7Me). In Ocimum basilicum (Sweet basil), this protein is Flavonoid 7-O-methyltransferase 1.